The chain runs to 392 residues: MAMPTIKHVRAFTVRGGGADYHDQDDGHWIDDHIATPMSRYPEYRESRRSFGINVLGTLVVEIEASDGSVGFAVTTGGEIGAFIVERHLARFLEGRCVTDIETMWDQMYYATLYYGRKGVVLNTISGVDLALWDLLGKVRGEPVYQLLGGPVRDELVFYATGARPDLAKQMGFIGGKLPLQHGPAENEEGLRKNLEKLADMRNRVGDDFWLMFDCWMSLDVRYATRLANAAHEYGLKWIEECLPPDDYWGYADLRRNVPRGMMVSTGEHEATRWGFRMLLEMGCCDLIQPDVGWCGGITELIKISALADAHNVMVVPHGSSVYSYHFVVTRHNSPFAEFLMMAPKADEVVPMFTPLLLDEPVPVNGRMKVPDRPGFGVRLNPECALVRPYTH.

Substrate contacts are provided by His22 and Arg48. Residues Asp214, Glu240, and Glu268 each coordinate Mg(2+). His318 acts as the Proton acceptor in catalysis. Glu338 is a binding site for substrate.

Belongs to the mandelate racemase/muconate lactonizing enzyme family. RhamD subfamily. In terms of assembly, homooctamer; tetramer of dimers. Requires Mg(2+) as cofactor.

The enzyme catalyses L-rhamnonate = 2-dehydro-3-deoxy-L-rhamnonate + H2O. In terms of biological role, catalyzes the dehydration of L-rhamnonate to 2-keto-3-deoxy-L-rhamnonate (KDR). This is L-rhamnonate dehydratase from Burkholderia ambifaria (strain MC40-6).